Reading from the N-terminus, the 79-residue chain is Ferredoxin oxidoreductase 1 subunit ForD (79 aa).

4Fe-4S ferredoxin-type domains follow at residues 3–35 (YVAQ…YTDE) and 37–65 (HHAY…RDSI). Residues cysteine 12, cysteine 17, cysteine 20, cysteine 24, cysteine 46, cysteine 49, cysteine 52, and cysteine 56 each coordinate [4Fe-4S] cluster.

As to quaternary structure, heterotetramer of one alpha, one beta, one delta and one gamma chain. Requires [4Fe-4S] cluster as cofactor.

The sequence is that of Ferredoxin oxidoreductase 1 subunit ForD (forD1) from Aquifex aeolicus (strain VF5).